A 62-amino-acid chain; its full sequence is Conotoxin Mi5.2 (62 aa).

Positions 1–19 (MRCVPVFIILLLLIPSASS) are cleaved as a signal peptide. The propeptide occupies 20-50 (VDVQPLTRDDVPLASFLDDARRTLRSPWMTR).

The protein belongs to the conotoxin T superfamily. In terms of processing, contains 2 disulfide bonds that can be either 'C1-C3, C2-C4' or 'C1-C4, C2-C3', since these disulfide connectivities have been observed for conotoxins with cysteine framework V (for examples, see AC P0DQQ7 and AC P81755). As to expression, expressed by the venom duct.

It localises to the secreted. The chain is Conotoxin Mi5.2 from Conus miles (Soldier cone).